A 436-amino-acid polypeptide reads, in one-letter code: Eukaryotic peptide chain release factor subunit 1-1 (436 aa).

The protein belongs to the eukaryotic release factor 1 family. Heterodimer of two subunits, one of which binds GTP.

It localises to the cytoplasm. Its function is as follows. Directs the termination of nascent peptide synthesis (translation) in response to the termination codons UAA, UAG and UGA. Modulates plant growth and development. This Arabidopsis thaliana (Mouse-ear cress) protein is Eukaryotic peptide chain release factor subunit 1-1 (ERF1-1).